We begin with the raw amino-acid sequence, 139 residues long: Ribonuclease P protein component (139 aa).

The segment at 116–139 (FSKNKSTIGGEYSPKNEQCESELP) is disordered.

This sequence belongs to the RnpA family. Consists of a catalytic RNA component (M1 or rnpB) and a protein subunit.

The catalysed reaction is Endonucleolytic cleavage of RNA, removing 5'-extranucleotides from tRNA precursor.. Functionally, RNaseP catalyzes the removal of the 5'-leader sequence from pre-tRNA to produce the mature 5'-terminus. It can also cleave other RNA substrates such as 4.5S RNA. The protein component plays an auxiliary but essential role in vivo by binding to the 5'-leader sequence and broadening the substrate specificity of the ribozyme. The chain is Ribonuclease P protein component from Chlamydia abortus (strain DSM 27085 / S26/3) (Chlamydophila abortus).